Reading from the N-terminus, the 1171-residue chain is DNA-directed RNA polymerase subunit beta (1171 aa).

Belongs to the RNA polymerase beta chain family. The RNAP catalytic core consists of 2 alpha, 1 beta, 1 beta' and 1 omega subunit. When a sigma factor is associated with the core the holoenzyme is formed, which can initiate transcription.

It catalyses the reaction RNA(n) + a ribonucleoside 5'-triphosphate = RNA(n+1) + diphosphate. DNA-dependent RNA polymerase catalyzes the transcription of DNA into RNA using the four ribonucleoside triphosphates as substrates. This is DNA-directed RNA polymerase subunit beta from Kineococcus radiotolerans (strain ATCC BAA-149 / DSM 14245 / SRS30216).